The chain runs to 162 residues: N5-carboxyaminoimidazole ribonucleotide mutase (162 aa).

The substrate site is built by S11, D14, and R41.

It belongs to the AIR carboxylase family. Class I subfamily.

It catalyses the reaction 5-carboxyamino-1-(5-phospho-D-ribosyl)imidazole + H(+) = 5-amino-1-(5-phospho-D-ribosyl)imidazole-4-carboxylate. It participates in purine metabolism; IMP biosynthesis via de novo pathway; 5-amino-1-(5-phospho-D-ribosyl)imidazole-4-carboxylate from 5-amino-1-(5-phospho-D-ribosyl)imidazole (N5-CAIR route): step 2/2. Functionally, catalyzes the conversion of N5-carboxyaminoimidazole ribonucleotide (N5-CAIR) to 4-carboxy-5-aminoimidazole ribonucleotide (CAIR). The polypeptide is N5-carboxyaminoimidazole ribonucleotide mutase (Brucella melitensis biotype 1 (strain ATCC 23456 / CCUG 17765 / NCTC 10094 / 16M)).